Consider the following 1736-residue polypeptide: Collagen alpha-2(XI) chain (1736 aa).

The signal sequence occupies residues 1–27 (MERCSRCHRLLLFLPLVLGLSAAPGWA). In terms of domain architecture, Laminin G-like spans 57-228 (DVAYRVARPA…QSCGQKDLEC (172 aa)). The tract at residues 215 to 486 (QAAYQSCGQK…ILQQARLALR (272 aa)) is nonhelical region. Disordered regions lie at residues 228 to 270 (CERE…PTES), 364 to 465 (LSAE…DKGP), and 485 to 1538 (LRGP…GSPA). Over residues 258-269 (PQSQEPQKQPTE) the composition is skewed to polar residues. Collagen-like domains are found at residues 399 to 447 (GPPG…GPPG), 487 to 545 (GPPG…ADGA), and 546 to 583 (RGMPGEPGMKGDRGFDGLPGLPGEKGQRGDTGAQGLPG). Positions 487 to 1500 (GPPGPMGYTG…PGHPGPPGEV (1014 aa)) are triple-helical region. Over residues 497-533 (RPGPLGQPGSPGLKGESGDLGPQGPRGPQGLTGPPGK) the composition is skewed to low complexity. Positions 615 to 624 (KGPPGIPGPP) are enriched in pro residues. Positions 650 to 668 (QQGTPGAQGLPGPQGAIGP) are enriched in low complexity. Positions 682–737 (GMPGSDGLPGHPGKEGPPGTKGNQGPSGPQGPLGYPGPRGVKGVDGIRGLKGHKGE) constitute a Collagen-like 4 domain. Residues 765–774 (RGEDGPEGPK) show a composition bias toward basic and acidic residues. 2 stretches are compositionally biased toward low complexity: residues 776 to 789 (RTGPTGDPGPTGLM) and 842 to 861 (PTGPRGQRGPRGATGKSGAK). 5 Collagen-like domains span residues 868–924 (GPHG…PGPP), 967–1025 (GDPG…AAGS), 1026–1055 (GGPIGPPGRPGPQGPPGAAGEKGVPGEKGP), 1056–1086 (IGPTGRDGVQGPVGLPGPAGPPGVAGEDGDK), and 1114–1172 (GPVG…ETGD). The segment covering 994–1003 (GTAGGPGLKG) has biased composition (gly residues). Residues 1029-1040 (IGPPGRPGPQGP) are compositionally biased toward pro residues. 2 stretches are compositionally biased toward low complexity: residues 1115-1133 (PVGQPGAAGADGEPGARGP) and 1155-1164 (IGLQGLPGPS). Over residues 1176-1187 (MGPPGPPGPRGP) the composition is skewed to pro residues. Residues 1188-1197 (AGPNGADGPQ) show a composition bias toward low complexity. A compositionally biased stretch (gly residues) spans 1198-1207 (GSPGGVGNLG). The span at 1217–1230 (ESGSPGVQGEPGVK) shows a compositional bias: low complexity. The span at 1232–1241 (PRGERGEKGE) shows a compositional bias: basic and acidic residues. Over residues 1256–1272 (PTGDNGPKGNPGPVGFP) the composition is skewed to low complexity. Residues 1287–1296 (DGAKGDRGED) are compositionally biased toward basic and acidic residues. Positions 1376–1386 (QQGRPGATGQA) are enriched in low complexity. Pro residues-rich tracts occupy residues 1388-1397 (PPGPVGPPGL) and 1457-1467 (PGGPPGLPGPS). Collagen-like domains follow at residues 1393–1447 (GPPG…GETG) and 1448–1499 (IPGA…PPGE). A compositionally biased stretch (low complexity) spans 1469–1481 (PKGAKGATGPAGP). Residues 1501-1736 (IQPLPIQMPK…VLLGPVCFMG (236 aa)) constitute a propeptide, C-terminal propeptide. Residues 1541–1735 (EEIFGSLDSL…GVLLGPVCFM (195 aa)) enclose the Fibrillar collagen NC1 domain. A disulfide bridge connects residues Cys1571 and Cys1603. The Ca(2+) site is built by Asp1589, Asn1591, Gln1592, Cys1594, and Asp1597. Asn1604 is a glycosylation site (N-linked (GlcNAc...) asparagine). 2 disulfide bridges follow: Cys1612–Cys1733 and Cys1655–Cys1689.

This sequence belongs to the fibrillar collagen family. As to quaternary structure, trimers composed of three different chains: alpha 1(XI), alpha 2(XI), and alpha 3(XI). Alpha 3(XI) is a post-translational modification of alpha 1(II). Alpha 1(V) can also be found instead of alpha 3(XI)=1(II). Post-translationally, prolines at the third position of the tripeptide repeating unit (G-X-Y) are hydroxylated in some or all of the chains.

The protein resides in the secreted. It is found in the extracellular space. It localises to the extracellular matrix. Its function is as follows. May play an important role in fibrillogenesis by controlling lateral growth of collagen II fibrils. The chain is Collagen alpha-2(XI) chain (Col11a2) from Mus musculus (Mouse).